Reading from the N-terminus, the 130-residue chain is Small ribosomal subunit protein uS9 (130 aa).

The protein belongs to the universal ribosomal protein uS9 family.

The chain is Small ribosomal subunit protein uS9 from Oceanobacillus iheyensis (strain DSM 14371 / CIP 107618 / JCM 11309 / KCTC 3954 / HTE831).